The chain runs to 230 residues: Uracil-DNA glycosylase (230 aa).

Asp72 acts as the Proton acceptor in catalysis.

It belongs to the uracil-DNA glycosylase (UDG) superfamily. UNG family.

Its subcellular location is the cytoplasm. It carries out the reaction Hydrolyzes single-stranded DNA or mismatched double-stranded DNA and polynucleotides, releasing free uracil.. Its function is as follows. Excises uracil residues from the DNA which can arise as a result of misincorporation of dUMP residues by DNA polymerase or due to deamination of cytosine. This is Uracil-DNA glycosylase from Wolinella succinogenes (strain ATCC 29543 / DSM 1740 / CCUG 13145 / JCM 31913 / LMG 7466 / NCTC 11488 / FDC 602W) (Vibrio succinogenes).